Here is a 304-residue protein sequence, read N- to C-terminus: Thiosulfate sulfurtransferase TUM1 (304 aa).

2 Rhodanese domains span residues 20–137 and 177–299; these read KVHR…PLDS and LAKK…PEWI. Basic and acidic residues predominate over residues 191-201; the sequence is RFEGTEPEPRS. Residues 191–222 are disordered; the sequence is RFEGTEPEPRSDIPSGHIPGTQPLPYGSLLDP. S201 bears the Phosphoserine mark. The active-site Cysteine persulfide intermediate is the C259. Residue S264 is modified to Phosphoserine.

It is found in the mitochondrion. The protein localises to the cytoplasm. The catalysed reaction is thiosulfate + hydrogen cyanide = thiocyanate + sulfite + 2 H(+). In terms of biological role, sulfur transferase that accepts persulfite from NFS1 and transfers it to UBA4 in the pathway for 2-thiolation of the wobble uridine base of tRNAs. Stimulates sulfur transfer by NFS1. Involved in metabolism of sterol esters in a tRNA thiolation pathway-independent manner. The sequence is that of Thiosulfate sulfurtransferase TUM1 from Saccharomyces cerevisiae (strain ATCC 204508 / S288c) (Baker's yeast).